We begin with the raw amino-acid sequence, 406 residues long: Phosphoglycerate kinase (406 aa).

Residues aspartate 23–asparagine 25, arginine 38, histidine 61–arginine 64, arginine 117, and arginine 157 contribute to the substrate site. ATP-binding positions include glutamate 331 and glycine 357–isoleucine 360.

This sequence belongs to the phosphoglycerate kinase family. Monomer.

The protein localises to the cytoplasm. It carries out the reaction (2R)-3-phosphoglycerate + ATP = (2R)-3-phospho-glyceroyl phosphate + ADP. The protein operates within carbohydrate degradation; glycolysis; pyruvate from D-glyceraldehyde 3-phosphate: step 2/5. This Methanopyrus kandleri (strain AV19 / DSM 6324 / JCM 9639 / NBRC 100938) protein is Phosphoglycerate kinase.